We begin with the raw amino-acid sequence, 309 residues long: p-hydroxybenzoic acid efflux pump subunit AaeA (309 aa).

The chain crosses the membrane as a helical span at residues 12–32 (AITVVLVILAFIAIFNAWVYY).

It belongs to the membrane fusion protein (MFP) (TC 8.A.1) family.

The protein localises to the cell inner membrane. Its function is as follows. Forms an efflux pump with AaeB. In Escherichia coli O157:H7, this protein is p-hydroxybenzoic acid efflux pump subunit AaeA.